The primary structure comprises 212 residues: Adenylate kinase (212 aa).

Position 10–15 (10–15 (GAGKGT)) interacts with ATP. An NMP region spans residues 30 to 59 (STGDILREAMAQETELGQKAKSYIDAGELV). Residues Thr31, Arg36, 57-59 (ELV), 84-87 (GYPR), and Gln91 each bind AMP. Residues 125–158 (RRRVHEETGETYHLDHDPPPEDVDPDLIVQRSDD) form an LID region. ATP-binding positions include Arg126 and 135-136 (TY). AMP is bound by residues Arg155 and Arg166. Residue Gly194 participates in ATP binding.

Belongs to the adenylate kinase family. In terms of assembly, monomer.

It is found in the cytoplasm. It catalyses the reaction AMP + ATP = 2 ADP. Its pathway is purine metabolism; AMP biosynthesis via salvage pathway; AMP from ADP: step 1/1. Catalyzes the reversible transfer of the terminal phosphate group between ATP and AMP. Plays an important role in cellular energy homeostasis and in adenine nucleotide metabolism. This chain is Adenylate kinase, found in Salinibacter ruber (strain DSM 13855 / M31).